The sequence spans 804 residues: Leucine--tRNA ligase (804 aa).

Residues P40–H51 carry the 'HIGH' region motif. Positions K576–S580 match the 'KMSKS' region motif. K579 is an ATP binding site.

The protein belongs to the class-I aminoacyl-tRNA synthetase family.

The protein localises to the cytoplasm. It carries out the reaction tRNA(Leu) + L-leucine + ATP = L-leucyl-tRNA(Leu) + AMP + diphosphate. This chain is Leucine--tRNA ligase, found in Bacillus subtilis (strain 168).